The sequence spans 138 residues: Superoxide dismutase [Mn] (138 aa).

Mn(2+) is bound by residues H2, H49, D133, and H137.

It belongs to the iron/manganese superoxide dismutase family. Mn(2+) is required as a cofactor.

The enzyme catalyses 2 superoxide + 2 H(+) = H2O2 + O2. In terms of biological role, destroys superoxide anion radicals which are normally produced within the cells and which are toxic to biological systems. This chain is Superoxide dismutase [Mn] (sodA), found in Mycolicibacterium phlei (Mycobacterium phlei).